Reading from the N-terminus, the 445-residue chain is T-box transcription factor TBX19 (445 aa).

A DNA-binding region (T-box) is located at residues 45 to 218 (LEDAPLWQRF…YNPFAKAFLD (174 aa)).

Its subcellular location is the nucleus. Transcriptional regulator involved in developmental processes. Can activate POMC gene expression and repress the alpha glycoprotein subunit and thyroid-stimulating hormone beta promoters. The protein is T-box transcription factor TBX19 of Canis lupus familiaris (Dog).